A 100-amino-acid polypeptide reads, in one-letter code: uncharacterized protein (100 aa).

3 helical membrane-spanning segments follow: residues 9–29 (VYTY…SWVV), 41–61 (PYLI…ITAP), and 72–92 (SIPF…FLGI).

The protein resides in the membrane. This is an uncharacterized protein from Saccharomyces cerevisiae (strain ATCC 204508 / S288c) (Baker's yeast).